Consider the following 39-residue polypeptide: Photosystem II reaction center protein L (39 aa).

The helical transmembrane segment at 18-38 threads the bilayer; sequence SLYLGLLLIAVLGILFSSYFF.

This sequence belongs to the PsbL family. PSII is composed of 1 copy each of membrane proteins PsbA, PsbB, PsbC, PsbD, PsbE, PsbF, PsbH, PsbI, PsbJ, PsbK, PsbL, PsbM, PsbT, PsbX, PsbY, PsbZ, Psb30/Ycf12, peripheral proteins PsbO, CyanoQ (PsbQ), PsbU, PsbV and a large number of cofactors. It forms dimeric complexes.

It is found in the cellular thylakoid membrane. One of the components of the core complex of photosystem II (PSII). PSII is a light-driven water:plastoquinone oxidoreductase that uses light energy to abstract electrons from H(2)O, generating O(2) and a proton gradient subsequently used for ATP formation. It consists of a core antenna complex that captures photons, and an electron transfer chain that converts photonic excitation into a charge separation. This subunit is found at the monomer-monomer interface and is required for correct PSII assembly and/or dimerization. The polypeptide is Photosystem II reaction center protein L (Crocosphaera subtropica (strain ATCC 51142 / BH68) (Cyanothece sp. (strain ATCC 51142))).